We begin with the raw amino-acid sequence, 248 residues long: Pyridoxal 4-dehydrogenase (248 aa).

Residue 11–35 (LVTGAAQGIGKAIAARLAADGATVI) participates in NAD(+) binding. Serine 141 contacts substrate. The Proton acceptor role is filled by tyrosine 154.

This sequence belongs to the short-chain dehydrogenases/reductases (SDR) family. Homotetramer.

The catalysed reaction is pyridoxal + NAD(+) = 4-pyridoxolactone + NADH + H(+). Its pathway is cofactor degradation; B6 vitamer degradation; 4-pyridoxate from pyridoxal: step 1/2. Functionally, involved in the degradation of pyridoxine or pyridoxamine (free, phosphate-unbound, forms of vitamin B6). Oxidizes pyridoxal to 4-pyridoxolactone, but does not have activity toward pyridoxal 5'-phosphate, pyridoxine, pyridoxamine, pyridoxamine 5'-phosphate, 4-phthalaldehyde, 2-nitrobenzaldehyde, pyridine, formaldehyde, 2-carboxybenzaldehyde or sugars. The sequence is that of Pyridoxal 4-dehydrogenase from Mesorhizobium japonicum (strain LMG 29417 / CECT 9101 / MAFF 303099) (Mesorhizobium loti (strain MAFF 303099)).